A 155-amino-acid polypeptide reads, in one-letter code: Small ribosomal subunit protein uS7 (155 aa).

The protein belongs to the universal ribosomal protein uS7 family. In terms of assembly, part of the 30S ribosomal subunit. Contacts proteins S9 and S11.

Functionally, one of the primary rRNA binding proteins, it binds directly to 16S rRNA where it nucleates assembly of the head domain of the 30S subunit. Is located at the subunit interface close to the decoding center, probably blocks exit of the E-site tRNA. The protein is Small ribosomal subunit protein uS7 of Fervidobacterium nodosum (strain ATCC 35602 / DSM 5306 / Rt17-B1).